A 383-amino-acid chain; its full sequence is Heme chaperone HemW (383 aa).

Residues 1 to 241 form the Radical SAM core domain; the sequence is MPKLPPLSLY…LTMAGYQQYE (241 aa). Tyrosine 10 is a binding site for S-adenosyl-L-methionine. Residues cysteine 16, cysteine 20, and cysteine 23 each contribute to the [4Fe-4S] cluster site. S-adenosyl-L-methionine contacts are provided by residues glycine 70, 71-72, glutamate 103, glutamine 130, arginine 142, and aspartate 167; that span reads GT.

The protein belongs to the anaerobic coproporphyrinogen-III oxidase family. HemW subfamily. [4Fe-4S] cluster is required as a cofactor.

Its subcellular location is the cytoplasm. Its function is as follows. Probably acts as a heme chaperone, transferring heme to an unknown acceptor. Binds one molecule of heme per monomer, possibly covalently. Binds 1 [4Fe-4S] cluster. The cluster is coordinated with 3 cysteines and an exchangeable S-adenosyl-L-methionine. The sequence is that of Heme chaperone HemW from Haemophilus influenzae (strain ATCC 51907 / DSM 11121 / KW20 / Rd).